A 147-amino-acid chain; its full sequence is UPF0306 protein YhbP (147 aa).

The protein belongs to the UPF0306 family.

The sequence is that of UPF0306 protein YhbP from Salmonella schwarzengrund (strain CVM19633).